The following is a 363-amino-acid chain: Peptide chain release factor 1 (363 aa).

An N5-methylglutamine modification is found at Gln237. A compositionally biased stretch (basic and acidic residues) spans Glu284–Arg297. The tract at residues Glu284–Ser306 is disordered.

It belongs to the prokaryotic/mitochondrial release factor family. Methylated by PrmC. Methylation increases the termination efficiency of RF1.

It is found in the cytoplasm. Peptide chain release factor 1 directs the termination of translation in response to the peptide chain termination codons UAG and UAA. The protein is Peptide chain release factor 1 of Halorhodospira halophila (strain DSM 244 / SL1) (Ectothiorhodospira halophila (strain DSM 244 / SL1)).